We begin with the raw amino-acid sequence, 341 residues long: Large ribosomal subunit protein uL29m (341 aa).

The segment at 44–74 (LARTRYTKPKPKPPRRSKVRAPTQTTHHDTD) is disordered. Basic residues predominate over residues 48 to 62 (RYTKPKPKPPRRSKV).

It belongs to the universal ribosomal protein uL29 family. In terms of assembly, component of the mitochondrial large ribosomal subunit. Mature mitochondrial ribosomes consist of a small (37S) and a large (54S) subunit. The 37S subunit contains at least 33 different proteins and 1 molecule of RNA (15S). The 54S subunit contains at least 45 different proteins and 1 molecule of RNA (21S).

Its subcellular location is the mitochondrion. This is Large ribosomal subunit protein uL29m (MRPL4) from Eremothecium gossypii (strain ATCC 10895 / CBS 109.51 / FGSC 9923 / NRRL Y-1056) (Yeast).